The primary structure comprises 442 residues: Citrate transporter CitP (442 aa).

The next 13 membrane-spanning stretches (helical) occupy residues Ile27–Ser47, Ile59–Phe79, Leu83–Ile103, Phe114–Phe134, Val151–Gly171, Ala177–Leu197, Ser209–Ile229, Tyr267–Leu287, Gly293–Leu313, Val321–Gly341, Val349–Ile369, Ala387–Ala409, and Met421–Met441.

It belongs to the 2-hydroxycarboxylate transporter (2-HCT) (TC 2.A.24) family.

The protein localises to the cell membrane. It carries out the reaction (R)-lactate(in) + citrate(out) = (R)-lactate(out) + citrate(in). The catalysed reaction is (S)-lactate(in) + citrate(out) = (S)-lactate(out) + citrate(in). The enzyme catalyses citrate(in) + H(+)(in) = citrate(out) + H(+)(out). Its activity is regulated as follows. The transport of citrate is unaffected by the presence of citrate in the growth media. Its function is as follows. Secondary transporter involved in citrate metabolism. During cometabolism of citrate and glucose, catalyzes the uptake of divalent citrate into the cell coupled to the exit of monovalent lactate, the end product of glycolysis in L.lactis. The citrate/lactate exchange is electrogenic and results in the generation of a membrane potential. Plays an important role in resistance against lactate toxicity at low pH. In the absence of glucose, i.e. when no lactate is produced, CitP catalyzes the uptake of citrate in exchange with the citrate metabolism intermediates pyruvate and alpha-acetolactate, and the end product acetate. In the absence of glucose, CitP can also catalyze the proton-dependent transport of citrate. In vitro, shows a broad substrate specificity. Can transport a wide variety of mono- and dicarboxylates of the form X-CR(2)-COO(-), where X represents OH (2-hydroxy acid), O (2-keto acid), or H (acid) and R groups differ in size, hydrophobicity and composition. Many of the substrates are intermediates or products of amino acid metabolism, suggesting that CitP may have a broader physiological function than its role in citrate metabolism. In Lactococcus lactis subsp. lactis (Streptococcus lactis), this protein is Citrate transporter CitP.